The sequence spans 471 residues: Monocarboxylate transporter 4 (471 aa).

The Cytoplasmic portion of the chain corresponds to 1–17 (MGGAVVDEGPTGIKAPD). The helical transmembrane segment at 18–38 (GGWGWAVLFGCFIITGFSYAF) threads the bilayer. Residues 39 to 61 (PKAVSVFFKELMHEFGIGYSDTA) lie on the Extracellular side of the membrane. The chain crosses the membrane as a helical span at residues 62–82 (WISSILLAMLYGTGPLCSMCV). Over 83–84 (NR) the chain is Cytoplasmic. A helical transmembrane segment spans residues 85–105 (FGCRPVMLVGGLFASLGMVAA). Residues 106-109 (SFCR) are Extracellular-facing. A helical transmembrane segment spans residues 110 to 130 (SIIQIYLTTGVITGLGLALNF). Over 131-149 (QPSLIMLNRYFNKRRPMAN) the chain is Cytoplasmic. Residues 150–170 (GLAAAGSPVFLCALSPLGQLL) form a helical membrane-spanning segment. At 171-179 (QDHYGWRGG) the chain is on the extracellular side. A helical membrane pass occupies residues 180-200 (FLILGGLLLNCCVCAALMRPL). At 201–231 (VAPQASGGAEPHGPQRPSPRLLDLSVFRDRG) the chain is on the cytoplasmic side. The chain crosses the membrane as a helical span at residues 232–252 (FLIYAVAASIMVLGLFVPPVF). The Extracellular portion of the chain corresponds to 253-267 (VVSYAKDMGVPDTKA). Residues 268-288 (AFLLTILGFIDIFARPTAGFI) traverse the membrane as a helical segment. Topologically, residues 289-298 (TGLKKVRPYS) are cytoplasmic. A helical membrane pass occupies residues 299–319 (VYLFSFAMFFNGFTDLTGSTA). The Extracellular portion of the chain corresponds to 320–321 (SD). The helical transmembrane segment at 322 to 342 (YGGLVVFCIFFGISYGMVGAL) threads the bilayer. Residues 343–355 (QFEVLMAIVGTQK) are Cytoplasmic-facing. A helical membrane pass occupies residues 356–376 (FSSAIGLVLLLEAVAVLIGPP). Residues 377-391 (SGGKLLDATKVYKYV) are Extracellular-facing. Residues 392–412 (FILAGAEVLTSSLVLLLGNFF) traverse the membrane as a helical segment. The Cytoplasmic segment spans residues 413–471 (CIGKRKRPEVTKPEEVASEEEKLHKPPVDVRVDSREVEHFLKAEPEKNGEVVHTPETSV). Basolateral sorting signal regions lie at residues 429–447 (ASEE…VDSR) and 447–471 (REVE…ETSV). Residue serine 430 is modified to Phosphoserine. Threonine 466 carries the phosphothreonine modification. Serine 470 is subject to Phosphoserine.

It belongs to the major facilitator superfamily. Monocarboxylate porter (TC 2.A.1.13) family. Interacts with BSG; interaction mediates SLC16A3 targeting to the plasma membrane. As to expression, detected in testis, small intestine, parotid gland, lung and brain. Small amounts are detected in heart, kidney and spleen. Expressed in skeletal muscle.

The protein resides in the cell membrane. It is found in the basolateral cell membrane. The catalysed reaction is (S)-lactate(in) + H(+)(in) = (S)-lactate(out) + H(+)(out). The enzyme catalyses pyruvate(out) + H(+)(out) = pyruvate(in) + H(+)(in). Proton-dependent transporter of monocarboxylates such as L-lactate and pyruvate. Plays a predominant role in the L-lactate efflux from highly glycolytic cells. This Rattus norvegicus (Rat) protein is Monocarboxylate transporter 4 (Slc16a3).